The following is a 470-amino-acid chain: Flotillin-like protein 1 (470 aa).

The S-palmitoyl cysteine moiety is linked to residue C35. Residues 305–354 (EYETKVQEANWELYNKQKQAEAVLYEKQKQAEAQKAQADAAFYSKQKEAE) adopt a coiled-coil conformation.

This sequence belongs to the band 7/mec-2 family. Flotillin subfamily. May be palmitoylated.

It localises to the cell membrane. The protein resides in the membrane. It is found in the caveola. May act as a scaffolding protein within caveolar membranes, functionally participating in formation of caveolae or caveolae-like vesicles. In Arabidopsis thaliana (Mouse-ear cress), this protein is Flotillin-like protein 1 (FLOT1).